A 186-amino-acid chain; its full sequence is ATP synthase subunit delta (186 aa).

Belongs to the ATPase delta chain family. In terms of assembly, F-type ATPases have 2 components, F(1) - the catalytic core - and F(0) - the membrane proton channel. F(1) has five subunits: alpha(3), beta(3), gamma(1), delta(1), epsilon(1). F(0) has three main subunits: a(1), b(2) and c(10-14). The alpha and beta chains form an alternating ring which encloses part of the gamma chain. F(1) is attached to F(0) by a central stalk formed by the gamma and epsilon chains, while a peripheral stalk is formed by the delta and b chains.

It localises to the cell membrane. F(1)F(0) ATP synthase produces ATP from ADP in the presence of a proton or sodium gradient. F-type ATPases consist of two structural domains, F(1) containing the extramembraneous catalytic core and F(0) containing the membrane proton channel, linked together by a central stalk and a peripheral stalk. During catalysis, ATP synthesis in the catalytic domain of F(1) is coupled via a rotary mechanism of the central stalk subunits to proton translocation. Its function is as follows. This protein is part of the stalk that links CF(0) to CF(1). It either transmits conformational changes from CF(0) to CF(1) or is implicated in proton conduction. This is ATP synthase subunit delta from Wolbachia sp. subsp. Brugia malayi (strain TRS).